A 371-amino-acid polypeptide reads, in one-letter code: DNA replication and repair protein RecF (371 aa).

30-37 (GSNGQGKT) provides a ligand contact to ATP.

Belongs to the RecF family.

The protein resides in the cytoplasm. In terms of biological role, the RecF protein is involved in DNA metabolism; it is required for DNA replication and normal SOS inducibility. RecF binds preferentially to single-stranded, linear DNA. It also seems to bind ATP. The polypeptide is DNA replication and repair protein RecF (Acidothermus cellulolyticus (strain ATCC 43068 / DSM 8971 / 11B)).